The chain runs to 152 residues: Probable spermine N(1)-acetyltransferase (152 aa).

Positions 3 to 152 constitute an N-acetyltransferase domain; sequence INIKAVTDDN…NGEKVMVKEL (150 aa). Acetyl-CoA contacts are provided by residues 82–84, 89–95, and 122–131; these read FFI, QGKGLGK, and NIHAIRLYQR. Tyrosine 129 functions as the Proton donor in the catalytic mechanism.

This sequence belongs to the acetyltransferase family.

The enzyme catalyses an alkane-alpha,omega-diamine + acetyl-CoA = an N-acetylalkane-alpha,omega-diamine + CoA + H(+). It carries out the reaction spermine + acetyl-CoA = N(1)-acetylspermine + CoA + H(+). It functions in the pathway amine and polyamine degradation; spermine degradation. Its function is as follows. Probably acetylates spermine to N(1)-acetylspermine. This chain is Probable spermine N(1)-acetyltransferase, found in Bacillus subtilis subsp. natto (strain BEST195).